The following is a 200-amino-acid chain: RNA-binding protein with multiple splicing 2 (200 aa).

Positions 22-99 (RTLFVSGLPV…QTLRLEFAKA (78 aa)) constitute an RRM domain. The interval 32–42 (DIKPRELYLLF) is important for homodimerization.

Homodimer. As to expression, expressed in developing heart.

It localises to the cytoplasm. It is found in the nucleus. The protein localises to the stress granule. Its function is as follows. RNA-binding protein involved in the regulation of smooth muscle cell differentiation and proliferation in the gastrointestinal system. Binds NOG mRNA, the major inhibitor of the bone morphogenetic protein (BMP) pathway. Mediates an increase of NOG mRNA levels, thereby contributing to the negative regulation of BMP signaling pathway and promoting reversible dedifferentiation and proliferation of smooth muscle cells. Acts as a pre-mRNA alternative splicing regulator. Mediates ACTN1 and FLNB alternative splicing. Likely binds to mRNA tandem CAC trinucleotide or CA dinucleotide motifs. In Gallus gallus (Chicken), this protein is RNA-binding protein with multiple splicing 2.